The primary structure comprises 506 residues: Lysine--tRNA ligase (506 aa).

Residues Glu416 and Glu423 each contribute to the Mg(2+) site.

Belongs to the class-II aminoacyl-tRNA synthetase family. In terms of assembly, homodimer. It depends on Mg(2+) as a cofactor.

Its subcellular location is the cytoplasm. The enzyme catalyses tRNA(Lys) + L-lysine + ATP = L-lysyl-tRNA(Lys) + AMP + diphosphate. This Xylella fastidiosa (strain M23) protein is Lysine--tRNA ligase.